A 279-amino-acid polypeptide reads, in one-letter code: Large ribosomal subunit protein uL2 (279 aa).

The segment at R218–R279 is disordered. Basic residues predominate over residues K255 to R279.

It belongs to the universal ribosomal protein uL2 family. As to quaternary structure, part of the 50S ribosomal subunit. Forms a bridge to the 30S subunit in the 70S ribosome.

One of the primary rRNA binding proteins. Required for association of the 30S and 50S subunits to form the 70S ribosome, for tRNA binding and peptide bond formation. It has been suggested to have peptidyltransferase activity; this is somewhat controversial. Makes several contacts with the 16S rRNA in the 70S ribosome. The sequence is that of Large ribosomal subunit protein uL2 from Sulfurimonas denitrificans (strain ATCC 33889 / DSM 1251) (Thiomicrospira denitrificans (strain ATCC 33889 / DSM 1251)).